A 137-amino-acid polypeptide reads, in one-letter code: Small ribosomal subunit protein bS6 (137 aa).

Belongs to the bacterial ribosomal protein bS6 family.

Functionally, binds together with bS18 to 16S ribosomal RNA. In Mycoplasma mycoides subsp. mycoides SC (strain CCUG 32753 / NCTC 10114 / PG1), this protein is Small ribosomal subunit protein bS6.